The chain runs to 430 residues: Enolase (430 aa).

Position 163 (Gln163) interacts with (2R)-2-phosphoglycerate. Catalysis depends on Glu205, which acts as the Proton donor. 3 residues coordinate Mg(2+): Asp242, Glu287, and Asp314. (2R)-2-phosphoglycerate is bound by residues Lys339, Arg368, Ser369, and Lys390. The Proton acceptor role is filled by Lys339.

It belongs to the enolase family. Mg(2+) is required as a cofactor.

The protein localises to the cytoplasm. It is found in the secreted. The protein resides in the cell surface. It carries out the reaction (2R)-2-phosphoglycerate = phosphoenolpyruvate + H2O. It functions in the pathway carbohydrate degradation; glycolysis; pyruvate from D-glyceraldehyde 3-phosphate: step 4/5. Its function is as follows. Catalyzes the reversible conversion of 2-phosphoglycerate (2-PG) into phosphoenolpyruvate (PEP). It is essential for the degradation of carbohydrates via glycolysis. This is Enolase from Listeria innocua serovar 6a (strain ATCC BAA-680 / CLIP 11262).